Consider the following 668-residue polypeptide: DNA ligase (668 aa).

NAD(+)-binding positions include 31–35 (DYDFD), 80–81 (SL), and glutamate 111. Lysine 113 functions as the N6-AMP-lysine intermediate in the catalytic mechanism. Residues arginine 134, glutamate 170, lysine 285, and lysine 309 each contribute to the NAD(+) site. Residues cysteine 403, cysteine 406, cysteine 421, and cysteine 427 each contribute to the Zn(2+) site. A BRCT domain is found at 587–668 (NATEKFIGKT…EFITKLNESE (82 aa)).

The protein belongs to the NAD-dependent DNA ligase family. LigA subfamily. It depends on Mg(2+) as a cofactor. Requires Mn(2+) as cofactor.

The catalysed reaction is NAD(+) + (deoxyribonucleotide)n-3'-hydroxyl + 5'-phospho-(deoxyribonucleotide)m = (deoxyribonucleotide)n+m + AMP + beta-nicotinamide D-nucleotide.. Its function is as follows. DNA ligase that catalyzes the formation of phosphodiester linkages between 5'-phosphoryl and 3'-hydroxyl groups in double-stranded DNA using NAD as a coenzyme and as the energy source for the reaction. It is essential for DNA replication and repair of damaged DNA. The chain is DNA ligase from Flavobacterium johnsoniae (strain ATCC 17061 / DSM 2064 / JCM 8514 / BCRC 14874 / CCUG 350202 / NBRC 14942 / NCIMB 11054 / UW101) (Cytophaga johnsonae).